We begin with the raw amino-acid sequence, 223 residues long: Deoxyribose-phosphate aldolase (223 aa).

D91 functions as the Proton donor/acceptor in the catalytic mechanism. K153 serves as the catalytic Schiff-base intermediate with acetaldehyde. K182 (proton donor/acceptor) is an active-site residue.

The protein belongs to the DeoC/FbaB aldolase family. DeoC type 1 subfamily.

It localises to the cytoplasm. The enzyme catalyses 2-deoxy-D-ribose 5-phosphate = D-glyceraldehyde 3-phosphate + acetaldehyde. It functions in the pathway carbohydrate degradation; 2-deoxy-D-ribose 1-phosphate degradation; D-glyceraldehyde 3-phosphate and acetaldehyde from 2-deoxy-alpha-D-ribose 1-phosphate: step 2/2. Catalyzes a reversible aldol reaction between acetaldehyde and D-glyceraldehyde 3-phosphate to generate 2-deoxy-D-ribose 5-phosphate. The polypeptide is Deoxyribose-phosphate aldolase (Streptococcus pyogenes serotype M3 (strain ATCC BAA-595 / MGAS315)).